The primary structure comprises 110 residues: Large ribosomal subunit protein uL22 (110 aa).

This sequence belongs to the universal ribosomal protein uL22 family. As to quaternary structure, part of the 50S ribosomal subunit.

This protein binds specifically to 23S rRNA; its binding is stimulated by other ribosomal proteins, e.g. L4, L17, and L20. It is important during the early stages of 50S assembly. It makes multiple contacts with different domains of the 23S rRNA in the assembled 50S subunit and ribosome. Its function is as follows. The globular domain of the protein is located near the polypeptide exit tunnel on the outside of the subunit, while an extended beta-hairpin is found that lines the wall of the exit tunnel in the center of the 70S ribosome. The chain is Large ribosomal subunit protein uL22 from Yersinia pseudotuberculosis serotype O:1b (strain IP 31758).